The following is an 826-amino-acid chain: Leucine--tRNA ligase (826 aa).

The 'HIGH' region motif lies at 41–51 (PYPSGKLHMGH). A 'KMSKS' region motif is present at residues 586-590 (KMSKS). Lys589 contacts ATP.

This sequence belongs to the class-I aminoacyl-tRNA synthetase family.

It localises to the cytoplasm. The enzyme catalyses tRNA(Leu) + L-leucine + ATP = L-leucyl-tRNA(Leu) + AMP + diphosphate. This chain is Leucine--tRNA ligase, found in Natranaerobius thermophilus (strain ATCC BAA-1301 / DSM 18059 / JW/NM-WN-LF).